Here is a 251-residue protein sequence, read N- to C-terminus: CDP-diacylglycerol pyrophosphatase (251 aa).

A helical membrane pass occupies residues 4-24; it reads AGLLFLVMIVIAVVAAGIGYW.

This sequence belongs to the Cdh family.

The protein resides in the cell inner membrane. It carries out the reaction a CDP-1,2-diacyl-sn-glycerol + H2O = a 1,2-diacyl-sn-glycero-3-phosphate + CMP + 2 H(+). Its pathway is phospholipid metabolism; CDP-diacylglycerol degradation; phosphatidate from CDP-diacylglycerol: step 1/1. This is CDP-diacylglycerol pyrophosphatase from Escherichia coli O7:K1 (strain IAI39 / ExPEC).